A 176-amino-acid chain; its full sequence is NAD(P)H-quinone oxidoreductase subunit 6, chloroplastic (176 aa).

The next 5 membrane-spanning stretches (helical) occupy residues 10–30 (ILML…VLLT), 33–53 (IYSA…YFLL), 60–80 (VAQL…AVMF), 95–115 (IGDG…MTTI), and 152–172 (FYLP…GAIT).

Belongs to the complex I subunit 6 family. In terms of assembly, NDH is composed of at least 16 different subunits, 5 of which are encoded in the nucleus.

Its subcellular location is the plastid. It is found in the chloroplast thylakoid membrane. It carries out the reaction a plastoquinone + NADH + (n+1) H(+)(in) = a plastoquinol + NAD(+) + n H(+)(out). The catalysed reaction is a plastoquinone + NADPH + (n+1) H(+)(in) = a plastoquinol + NADP(+) + n H(+)(out). Its function is as follows. NDH shuttles electrons from NAD(P)H:plastoquinone, via FMN and iron-sulfur (Fe-S) centers, to quinones in the photosynthetic chain and possibly in a chloroplast respiratory chain. The immediate electron acceptor for the enzyme in this species is believed to be plastoquinone. Couples the redox reaction to proton translocation, and thus conserves the redox energy in a proton gradient. The sequence is that of NAD(P)H-quinone oxidoreductase subunit 6, chloroplastic (ndhG) from Lolium perenne (Perennial ryegrass).